The sequence spans 139 residues: Protocatechuate 4,5-dioxygenase alpha chain (139 aa).

As to quaternary structure, composed of two subunits (alpha and beta) in a 1:1 ratio. Fe(2+) serves as cofactor.

It catalyses the reaction 3,4-dihydroxybenzoate + O2 = 4-carboxy-2-hydroxy-cis,cis-muconate 6-semialdehyde + H(+). In terms of biological role, responsible for the aromatic ring fission of protocatechuate. This chain is Protocatechuate 4,5-dioxygenase alpha chain (ligA), found in Sphingobium sp. (strain NBRC 103272 / SYK-6).